Consider the following 388-residue polypeptide: Regulator of G-protein signaling 20 (388 aa).

Positions 138–199 (PGRPSGGRPL…TPGAAPGQPG (62 aa)) are disordered. A compositionally biased stretch (low complexity) spans 185–197 (PAAQDTPGAAPGQ). In terms of domain architecture, RGS spans 262–378 (SFDKLMVTPA…MNSAVYKDLL (117 aa)).

In terms of assembly, forms a complex with G(alpha)z/i2 subunits and mu-opioid receptors; the formation of this complex results in mu-opioid receptor desensitization. Interacts with OPRM1. In terms of processing, fatty acylated. Heavily palmitoylated in the cysteine string motif. Post-translationally, N- and O-glycosylated in synapsomal membranes. Serine phosphorylated in synapsomal membranes. In terms of processing, sumoylated with SUMO1 and SUMO2 in synaptosomes. The sumoylated forms act as a scaffold for sequestering mu-opioid receptor-activated G(alpha) subunits. Isoform 5 is expressed in brain at high levels in the caudate nucleus and temporal lobe.

The protein resides in the membrane. Its subcellular location is the nucleus. It localises to the cytoplasm. Functionally, inhibits signal transduction by increasing the GTPase activity of G protein alpha subunits thereby driving them into their inactive GDP-bound form. Binds selectively to G(z)-alpha and G(alpha)-i2 subunits, accelerates their GTPase activity and regulates their signaling activities. The G(z)-alpha activity is inhibited by the phosphorylation and palmitoylation of the G-protein. Negatively regulates mu-opioid receptor-mediated activation of the G-proteins. This is Regulator of G-protein signaling 20 (RGS20) from Homo sapiens (Human).